The primary structure comprises 467 residues: MTKIVSVAEVLQGRTAIGEKVTVRGWVRTRRDSKAGLSFLAVYDGSCFDPIQAIINNDIVNYESEVLRLTTGCSVIVTGTVSKSPAEGQAVELQAETVEVVGWVEDPDTYPMAAKRHSIEYLREVAHLRPRTNIIGAVARVRHCLAQAIHRFFNEQGFYWVATPLITASDTEGAGEMFRVSTLDLENLPRDDKGAVDFSQDFFGKESFLTVSGQLNGETYACALSKVYTFGPTFRAENSNTTRHLAEFWMVEPEVAFATLADNAKLAEDMLKYVFNAVLKERMDDLKFFEKHIDKDVINRLERFVASDFAQIDYTDAIDVLLKSGKKFEFPVSWGIDLSSEHERYLAEEHFKSPVVVKNYPKDIKAFYMRLNEDGKTVAAMDVLAPGIGEIIGGSQREERLDVLDARMAEMGLNPEDYWWYRDLRKYGTVPHSGFGLGFERLIVYVTGLQNIREVIPFPRTPRNANF.

Belongs to the class-II aminoacyl-tRNA synthetase family. In terms of assembly, homodimer.

The protein resides in the cytoplasm. The catalysed reaction is tRNA(Asn) + L-asparagine + ATP = L-asparaginyl-tRNA(Asn) + AMP + diphosphate + H(+). The protein is Asparagine--tRNA ligase of Mannheimia succiniciproducens (strain KCTC 0769BP / MBEL55E).